A 297-amino-acid chain; its full sequence is Probable transcription factor vicR (297 aa).

Disordered stretches follow at residues 45-80 (LPGLDSQASPQSGQKEEMRRKNAEAQMQNDSNHSET) and 100-134 (TNQAYQNHPSRSREDITNSRAERHSQTSTQPKNVH). Residues 58-67 (QKEEMRRKNA) show a composition bias toward basic and acidic residues. The span at 69–80 (AQMQNDSNHSET) shows a compositional bias: polar residues. The segment covering 110-124 (RSREDITNSRAERHS) has biased composition (basic and acidic residues).

Its subcellular location is the nucleus. Its function is as follows. Probable transcription factor; part of the gene cluster that mediates the biosynthesis of the secondary metabolite victorin, the molecular basis for Victoria blight of oats. May play a role in the regulation of the production of victorin. The chain is Probable transcription factor vicR from Bipolaris victoriae (strain FI3) (Victoria blight of oats agent).